The sequence spans 230 residues: Claudin-2 (230 aa).

Residues 1 to 7 are Cytoplasmic-facing; sequence MASLGLQ. The helical transmembrane segment at 8-28 threads the bilayer; sequence LVGYILGLLGLLGTLVAMLLP. Residues 29–81 are Extracellular-facing; sequence SWRTSSYVGTSIVTAVGFSKGLWMECATHSTGITQCDIYSTLLGLPADIQAAQ. Cys54 and Cys64 are joined by a disulfide. The helical transmembrane segment at 82–102 threads the bilayer; it reads AMMVTSSAISSLACIVSVVGM. Over 103–116 the chain is Cytoplasmic; that stretch reads RCTVFCQDSRAKDR. A helical membrane pass occupies residues 117–137; sequence LAVVGGVFFIIGGLLGFIPVA. Over 138–162 the chain is Extracellular; the sequence is WNLHGILRDFYSPLVPDSMKFEIGE. A helical membrane pass occupies residues 163–183; that stretch reads ALYLGIISSLFSLVAGIILCF. Residues 184–230 lie on the Cytoplasmic side of the membrane; that stretch reads SCPLQGNRSDYYDSYQAQPLATRGSPRPGQPPKAKSEFNSYSLTGYV. Residues 205 to 230 form a disordered region; the sequence is TRGSPRPGQPPKAKSEFNSYSLTGYV. Lys218 is covalently cross-linked (Glycyl lysine isopeptide (Lys-Gly) (interchain with G-Cter in SUMO)). A phosphoserine mark is found at Ser219 and Ser223. Polar residues predominate over residues 220–230; the sequence is EFNSYSLTGYV. Positions 229–230 are interaction with TJP1, TJP2 and TJP3; that stretch reads YV.

The protein belongs to the claudin family. In terms of assembly, can form homo- and heteropolymers with other claudins to mediate paracellular barrier and channel functions of tight junctions in response to physiological stimuli. Homopolymers interact with CLDN3, but not CLDN1, homopolymers. Directly interacts with TJP1/ZO-1, TJP2/ZO-2 and TJP3/ZO-3. The disulfide bond is necessary for pore formation, but is not required for correct protein trafficking.

It is found in the cell junction. The protein resides in the tight junction. Its subcellular location is the cell membrane. The enzyme catalyses Na(+)(in) = Na(+)(out). The catalysed reaction is K(+)(in) = K(+)(out). It carries out the reaction Rb(+)(in) = Rb(+)(out). It catalyses the reaction Li(+)(in) = Li(+)(out). The enzyme catalyses Cs(+)(in) = Cs(+)(out). The catalysed reaction is Ca(2+)(in) = Ca(2+)(out). It carries out the reaction methylamine(out) = methylamine(in). It catalyses the reaction choline(out) = choline(in). The enzyme catalyses H2O(in) = H2O(out). Forms paracellular channels: polymerizes in tight junction strands with cation- and water-selective channels through the strands, conveying epithelial permeability in a process known as paracellular tight junction permeability. In intestinal epithelium, allows for sodium and water fluxes from the peritoneal side to the lumen of the intestine to regulate nutrient absorption and clear enteric pathogens as part of mucosal immune response. In kidney, allows passive sodium and calcium reabsorption across proximal tubules from the lumen back to the bloodstream. In the hepatobiliary tract, allows paracellular water and cation fluxes in the hepatic perivenous areas and biliary epithelium to generate bile flow and maintain osmotic gradients. In Canis lupus familiaris (Dog), this protein is Claudin-2 (CLDN2).